The chain runs to 421 residues: Gamma-glutamyl phosphate reductase (421 aa).

Belongs to the gamma-glutamyl phosphate reductase family.

It localises to the cytoplasm. The catalysed reaction is L-glutamate 5-semialdehyde + phosphate + NADP(+) = L-glutamyl 5-phosphate + NADPH + H(+). It functions in the pathway amino-acid biosynthesis; L-proline biosynthesis; L-glutamate 5-semialdehyde from L-glutamate: step 2/2. Its function is as follows. Catalyzes the NADPH-dependent reduction of L-glutamate 5-phosphate into L-glutamate 5-semialdehyde and phosphate. The product spontaneously undergoes cyclization to form 1-pyrroline-5-carboxylate. This chain is Gamma-glutamyl phosphate reductase, found in Pseudomonas paraeruginosa (strain DSM 24068 / PA7) (Pseudomonas aeruginosa (strain PA7)).